Consider the following 349-residue polypeptide: Increased DNA methylation 2 (349 aa).

A disordered region spans residues Glu-210–Val-230. Positions Glu-233–Val-349 constitute a sHSP domain.

It belongs to the small heat shock protein (HSP20) family. Homodimer or oligomer. May form an 16-mer complex. Interacts with MBD7 (via C-terminus). Interacts with IDM1 (via N-terminus). Interacts with IMD3. Part of a complex made of MBD7, IDM1, IDM2, IDM3 and ROS1. As to expression, expressed in cotyledons and hypocotyls in young seedlings.

The protein localises to the nucleus. Its subcellular location is the nucleoplasm. Prevents DNA hypermethylation and transcriptional silencing of transgenes and of some endogenous genes. May act as a molecular chaperone of IDM1, regulating its H3K18 acetylation activity. The chain is Increased DNA methylation 2 from Arabidopsis thaliana (Mouse-ear cress).